The chain runs to 203 residues: Recombination protein RecR (203 aa).

Residues 57–73 (CQSCGTLKSNSLGCNNC) form a C4-type zinc finger. The 95-residue stretch at 81-175 (NKICVVEDIA…KVTKLAQGLP (95 aa)) folds into the Toprim domain.

This sequence belongs to the RecR family.

May play a role in DNA repair. It seems to be involved in an RecBC-independent recombinational process of DNA repair. It may act with RecF and RecO. The polypeptide is Recombination protein RecR (Pelagibacter ubique (strain HTCC1062)).